The following is a 716-amino-acid chain: Segment polarity protein dishevelled homolog DVL-3 (716 aa).

The region spanning 1-82 is the DIX domain; the sequence is MGETKIIYHL…RVVSWLVSAE (82 aa). Arg-27 bears the Omega-N-methylarginine mark. Residues Ser-48 and Ser-125 each carry the phosphoserine modification. The tract at residues 85–235 is disordered; that stretch reads HPEPAPFCAD…VSRIERSSSF (151 aa). Positions 142–156 are enriched in basic and acidic residues; the sequence is QRERPRRRDGPEHAA. The segment covering 175-190 has biased composition (low complexity); sequence SSSTLMSSELETTSFF. Ser-192 is modified (phosphoserine). Residues 199–212 are compositionally biased toward low complexity; that stretch reads SRFSSSTEQSSASR. Position 212 is an omega-N-methylarginine (Arg-212). Positions 213–226 are enriched in basic residues; that stretch reads LMRRHKRRRRKQKV. Residues 249–321 enclose the PDZ domain; it reads TVTLNMEKYN…NDDAVRVLRE (73 aa). Arg-271 is subject to Asymmetric dimethylarginine; by PRMT1; alternate. Residues Arg-271 and Arg-342 each carry the symmetric dimethylarginine; by PRMT7; alternate modification. Position 342 is an omega-N-methylarginine; alternate (Arg-342). Thr-346 carries the phosphothreonine modification. Residues 422 to 496 form the DEP domain; that stretch reads PESGLEVRDR…SEQCYYIFGD (75 aa). The tract at residues 546 to 691 is disordered; it reads PYNPHPGFPE…PPGRDLASVP (146 aa). Residues 565–581 show a composition bias toward low complexity; the sequence is ASSQHSEGSRSSGSNRS. Basic and acidic residues-rich tracts occupy residues 582–595 and 604–622; these read GSDRRKEKDPKAGD and ESDHTTRSSLRGPRERAPS. At Arg-614 the chain carries Symmetric dimethylarginine; by PRMT7. Pro residues-rich tracts occupy residues 653–663 and 670–682; these read YGPPGVPPLYG and TPPPAAMGPPGAP. A Phosphoserine modification is found at Ser-697. Residue Arg-698 is modified to Omega-N-methylarginine; alternate. Dimethylated arginine; alternate is present on Arg-698. The residue at position 700 (Ser-700) is a Phosphoserine.

It belongs to the DSH family. Interacts (via the PDZ domain) with the C-terminal regions of VANGL1 and VANGL2. Interacts (via the region containing both the PDZ and DEP domains) with LRRFIP2; the DIX domain may inhibit this interaction. Interacts with CYLD. Interacts with CEP164 and DAB2. Interacts with DCDC2. Interacts with FOXK1 and FOXK2. Interacts with DAAM2. Ubiquitinated. Deubiquitinated by CYLD, which acts on 'Lys-63'-linked ubiquitin chains. In terms of processing, phosphorylated by CSNK1D. Post-translationally, arginine methylation may function as a switch in regulation of function in Wnt signaling. In terms of tissue distribution, ubiquitous.

Its subcellular location is the cytoplasm. Its function is as follows. Involved in the signal transduction pathway mediated by multiple Wnt genes. This is Segment polarity protein dishevelled homolog DVL-3 (Dvl3) from Mus musculus (Mouse).